Here is a 350-residue protein sequence, read N- to C-terminus: Transmembrane protein 185A (350 aa).

7 helical membrane passes run 16 to 36 (LIYA…DGII), 41 to 61 (WAVF…ASVG), 81 to 101 (FKAM…EVLV), 111 to 131 (FWLL…AACV), 177 to 197 (ILMS…VLFL), 211 to 231 (ITMA…EILL), and 240 to 260 (AFSC…LMAT). The interval 298 to 350 (DLHHEDNEETEETPVPEPPKIAPMFRKKARVVITQSPGKYVLPPPKLNIEMPD) is mediates interaction with MAP1B.

The protein belongs to the TMEM185 family. As to quaternary structure, interacts with MAP1B.

It localises to the cell projection. It is found in the dendrite. The protein resides in the membrane. This is Transmembrane protein 185A (TMEM185A) from Homo sapiens (Human).